Here is a 617-residue protein sequence, read N- to C-terminus: uncharacterized protein (617 aa).

Low complexity-rich tracts occupy residues 1 to 16 (MSKC…SNSS) and 36 to 45 (STTSSNGSNS). Residues 1-49 (MSKCATPTPSTSSNSSDEAKRSPQPMSRGFPQRNMSTTSSNGSNSPRHR) are disordered. 3 helical membrane-spanning segments follow: residues 219 to 239 (LMIG…GGLA), 262 to 282 (TAGA…FTGY), and 427 to 447 (PITL…LLTM).

This sequence belongs to the TMCO4 family.

It is found in the membrane. This is an uncharacterized protein from Caenorhabditis elegans.